The chain runs to 159 residues: 2-C-methyl-D-erythritol 2,4-cyclodiphosphate synthase (159 aa).

2 residues coordinate a divalent metal cation: D10 and H12. Residues 10–12 (DVH) and 36–37 (HS) contribute to the 4-CDP-2-C-methyl-D-erythritol 2-phosphate site. Residue H44 coordinates a divalent metal cation. 4-CDP-2-C-methyl-D-erythritol 2-phosphate is bound by residues 58–60 (DIG), 63–67 (FPDTD), 102–108 (AQAPKMA), 134–137 (TTTE), F141, and R144.

This sequence belongs to the IspF family. As to quaternary structure, homotrimer. It depends on a divalent metal cation as a cofactor.

The enzyme catalyses 4-CDP-2-C-methyl-D-erythritol 2-phosphate = 2-C-methyl-D-erythritol 2,4-cyclic diphosphate + CMP. Its pathway is isoprenoid biosynthesis; isopentenyl diphosphate biosynthesis via DXP pathway; isopentenyl diphosphate from 1-deoxy-D-xylulose 5-phosphate: step 4/6. Its function is as follows. Involved in the biosynthesis of isopentenyl diphosphate (IPP) and dimethylallyl diphosphate (DMAPP), two major building blocks of isoprenoid compounds. Catalyzes the conversion of 4-diphosphocytidyl-2-C-methyl-D-erythritol 2-phosphate (CDP-ME2P) to 2-C-methyl-D-erythritol 2,4-cyclodiphosphate (ME-CPP) with a corresponding release of cytidine 5-monophosphate (CMP). The chain is 2-C-methyl-D-erythritol 2,4-cyclodiphosphate synthase from Idiomarina loihiensis (strain ATCC BAA-735 / DSM 15497 / L2-TR).